The sequence spans 235 residues: Regulator of G-protein signaling 18 (235 aa).

A Phosphoserine modification is found at Ser49. The region spanning 86-202 is the RGS domain; sequence SFDKLLSHRD…LKSDIYLDLM (117 aa). A phosphoserine mark is found at Ser216 and Ser218.

In terms of tissue distribution, expressed in peripheral leukocytes, bone marrow, platelet, spleen and fetal liver.

The protein resides in the cytoplasm. In terms of biological role, inhibits signal transduction by increasing the GTPase activity of G protein alpha subunits thereby driving them into their inactive GDP-bound form. Binds to G(i) alpha-1, G(i) alpha-2, G(i) alpha-3 and G(q) alpha. The polypeptide is Regulator of G-protein signaling 18 (RGS18) (Homo sapiens (Human)).